The following is a 330-amino-acid chain: Tryptophan--tRNA ligase (330 aa).

ATP is bound by residues 10-12 and 18-19; these read QPS and GN. The 'HIGH' region motif lies at 11–19; sequence PSGTLTLGN. D133 contacts L-tryptophan. ATP is bound by residues 145 to 147, I184, and 193 to 197; these read GED and KMSKS. The 'KMSKS' region signature appears at 193-197; it reads KMSKS.

Belongs to the class-I aminoacyl-tRNA synthetase family. Homodimer.

Its subcellular location is the cytoplasm. The enzyme catalyses tRNA(Trp) + L-tryptophan + ATP = L-tryptophyl-tRNA(Trp) + AMP + diphosphate + H(+). Catalyzes the attachment of tryptophan to tRNA(Trp). This Halalkalibacterium halodurans (strain ATCC BAA-125 / DSM 18197 / FERM 7344 / JCM 9153 / C-125) (Bacillus halodurans) protein is Tryptophan--tRNA ligase.